Here is a 165-residue protein sequence, read N- to C-terminus: 6,7-dimethyl-8-ribityllumazine synthase (165 aa).

5-amino-6-(D-ribitylamino)uracil is bound by residues Trp26, 57–59 (SVE), and 79–81 (VVV). 84–85 (AT) contacts (2S)-2-hydroxy-3-oxobutyl phosphate. His87 acts as the Proton donor in catalysis. Residue His112 participates in 5-amino-6-(D-ribitylamino)uracil binding. Arg126 serves as a coordination point for (2S)-2-hydroxy-3-oxobutyl phosphate.

Belongs to the DMRL synthase family.

It carries out the reaction (2S)-2-hydroxy-3-oxobutyl phosphate + 5-amino-6-(D-ribitylamino)uracil = 6,7-dimethyl-8-(1-D-ribityl)lumazine + phosphate + 2 H2O + H(+). It participates in cofactor biosynthesis; riboflavin biosynthesis; riboflavin from 2-hydroxy-3-oxobutyl phosphate and 5-amino-6-(D-ribitylamino)uracil: step 1/2. In terms of biological role, catalyzes the formation of 6,7-dimethyl-8-ribityllumazine by condensation of 5-amino-6-(D-ribitylamino)uracil with 3,4-dihydroxy-2-butanone 4-phosphate. This is the penultimate step in the biosynthesis of riboflavin. This is 6,7-dimethyl-8-ribityllumazine synthase from Salinispora arenicola (strain CNS-205).